A 435-amino-acid polypeptide reads, in one-letter code: Zinc finger and BTB domain-containing protein 25 (435 aa).

A BTB domain is found at 1 to 107 (MDTASHSLVL…GIRFLHADYL (107 aa)). Glycyl lysine isopeptide (Lys-Gly) (interchain with G-Cter in SUMO2) cross-links involve residues Lys142, Lys148, Lys198, and Lys204. The C2H2-type 1 zinc finger occupies 238 to 260 (HLCHYCGERFDSRSNLRQHLHTH). Glycyl lysine isopeptide (Lys-Gly) (interchain with G-Cter in SUMO2) cross-links involve residues Lys303 and Lys330. Residues 349 to 371 (MSCTICGHKFPRKSQLLEHMYTH) form a C2H2-type 2 zinc finger. A Glycyl lysine isopeptide (Lys-Gly) (interchain with G-Cter in SUMO2) cross-link involves residue Lys405.

Expressed mainly in hematopoietic cells and testis.

Its subcellular location is the nucleus. Functionally, may be involved in transcriptional regulation. This is Zinc finger and BTB domain-containing protein 25 (ZBTB25) from Homo sapiens (Human).